The sequence spans 132 residues: Fluoride-specific ion channel FluC 2 (132 aa).

Transmembrane regions (helical) follow at residues 8–28 (LQLE…GALL), 41–61 (LLVN…PAAP), 66–86 (LLGI…LAAV), and 96–116 (AALG…ALGF). Residues glycine 73 and threonine 76 each coordinate Na(+).

It belongs to the fluoride channel Fluc/FEX (TC 1.A.43) family.

It is found in the cell inner membrane. It catalyses the reaction fluoride(in) = fluoride(out). Its activity is regulated as follows. Na(+) is not transported, but it plays an essential structural role and its presence is essential for fluoride channel function. In terms of biological role, fluoride-specific ion channel. Important for reducing fluoride concentration in the cell, thus reducing its toxicity. This Synechococcus sp. (strain CC9605) protein is Fluoride-specific ion channel FluC 2.